A 427-amino-acid polypeptide reads, in one-letter code: Pectin acetylesterase 5 (427 aa).

An N-terminal signal peptide occupies residues 1–35; that stretch reads MAIPRFSSLLRCRKWAKSDWLVASIGCVLIVFFLS. Asn-173 carries an N-linked (GlcNAc...) asparagine glycan. Catalysis depends on charge relay system residues Ser-209, Asp-305, and His-372. N-linked (GlcNAc...) asparagine glycosylation occurs at Asn-391.

The protein belongs to the pectinacetylesterase family.

The protein resides in the secreted. It localises to the cell wall. In terms of biological role, hydrolyzes acetyl esters in homogalacturonan regions of pectin. In type I primary cell wall, galacturonic acid residues of pectin can be acetylated at the O-2 and O-3 positions. Decreasing the degree of acetylation of pectin gels in vitro alters their physical properties. This Arabidopsis thaliana (Mouse-ear cress) protein is Pectin acetylesterase 5.